Consider the following 207-residue polypeptide: HTH-type transcriptional regulator BetI 2 (207 aa).

The HTH tetR-type domain maps to 8–68; that stretch reads PIRRQQLIKA…ATMRQILTDL (61 aa). A DNA-binding region (H-T-H motif) is located at residues 31-50; sequence TVMRIARHAGVSAGIISHYF.

The protein operates within amine and polyamine biosynthesis; betaine biosynthesis via choline pathway [regulation]. Its function is as follows. Repressor involved in the biosynthesis of the osmoprotectant glycine betaine. It represses transcription of the choline transporter BetT and the genes of BetAB involved in the synthesis of glycine betaine. In Chromohalobacter salexigens (strain ATCC BAA-138 / DSM 3043 / CIP 106854 / NCIMB 13768 / 1H11), this protein is HTH-type transcriptional regulator BetI 2.